Here is a 110-residue protein sequence, read N- to C-terminus: U-scoloptoxin(16)-Er7a (110 aa).

Residues 1–26 (MTSTRKLSVSCLIVFMVSSLIAVSSG) form the signal peptide.

Belongs to the scoloptoxin-16 family. Contains 4 disulfide bonds. Expressed by the venom gland.

The protein resides in the secreted. The chain is U-scoloptoxin(16)-Er7a from Ethmostigmus rubripes (Giant centipede).